Reading from the N-terminus, the 333-residue chain is Type II secretion system protein K (333 aa).

The propeptide at 1–7 (MRRGQNG) is leader sequence. A helical membrane pass occupies residues 8–29 (VALITVLLVVAVVTIVCAGLII). Topologically, residues 30-333 (RQQLAIRSSA…GGDDWKKDER (304 aa)) are periplasmic. Residues 313–333 (MGQGGLPIPSTGGDDWKKDER) are disordered.

Belongs to the GSP K family. As to quaternary structure, type II secretion is composed of four main components: the outer membrane complex, the inner membrane complex, the cytoplasmic secretion ATPase and the periplasm-spanning pseudopilus. Interacts with the tip of the type II pseudopilus subunits XcpV, XcpU and XcpW. Interacts with core component XcpT. Post-translationally, cleaved by prepilin peptidase.

Its subcellular location is the cell inner membrane. In terms of biological role, component of the type II secretion system required for the energy-dependent secretion of extracellular factors such as proteases and toxins from the periplasm. Plays a role in pseudopilus assembly and seems to control its length. Interacts with the pseudopilus tip complex that is critical for the recognition and binding of secretion substrates. Type II pseudopilus confers increased bacterial adhesive capabilities. The polypeptide is Type II secretion system protein K (xcpX) (Pseudomonas aeruginosa (strain ATCC 15692 / DSM 22644 / CIP 104116 / JCM 14847 / LMG 12228 / 1C / PRS 101 / PAO1)).